A 724-amino-acid polypeptide reads, in one-letter code: Protein Aster-A (724 aa).

The span at 1 to 18 shows a compositional bias: low complexity; that stretch reads MFDTTPHSGRSTPSSSPS. The tract at residues 1 to 66 is disordered; it reads MFDTTPHSGR…TPSTQSLGSR (66 aa). The segment covering 57-66 has biased composition (polar residues); sequence TPSTQSLGSR. The region spanning 91 to 158 is the GRAM domain; the sequence is EDFRKLFSKL…KEVTCLKKEK (68 aa). Residues 256–336 form a disordered region; it reads SSGAADRSQE…GPTTLGPLDL (81 aa). Phosphoserine occurs at positions 263, 267, and 271. Polar residues predominate over residues 300–312; that stretch reads DSQPDASSSQTVT. Residues 326-336 are compositionally biased toward low complexity; the sequence is DGPTTLGPLDL. Residues 367–538 enclose the VASt domain; that stretch reads SGRLLINSVF…ELAKAEKLSL (172 aa). Residue serine 415 is modified to Phosphoserine. Residues 560–579 are disordered; the sequence is SWRAHGDGPQHPDPDPCARA. The segment covering 563-575 has biased composition (basic and acidic residues); sequence AHGDGPQHPDPDP. A helical transmembrane segment spans residues 610-630; the sequence is LISIVICVSLIILIALNVLLF.

As to expression, expressed in liver.

The protein localises to the endoplasmic reticulum membrane. The protein resides in the cell membrane. It localises to the cytoplasmic vesicle. Its subcellular location is the autophagosome. Cholesterol transporter that mediates non-vesicular transport of cholesterol from the plasma membrane (PM) to the endoplasmic reticulum (ER). Contains unique domains for binding cholesterol and the PM, thereby serving as a molecular bridge for the transfer of cholesterol from the PM to the ER. Plays a crucial role in cholesterol homeostasis and has the unique ability to localize to the PM based on the level of membrane cholesterol. In lipid-poor conditions localizes to the ER membrane and in response to excess cholesterol in the PM is recruited to the endoplasmic reticulum-plasma membrane contact sites (EPCS) which is mediated by the GRAM domain. At the EPCS, the sterol-binding VASt/ASTER domain binds to the cholesterol in the PM and facilitates its transfer from the PM to ER. May play a role in tumor progression. Plays a role in autophagy regulation and is required for biogenesis of the autophagosome. This function in autophagy requires its cholesterol-transfer activity. This is Protein Aster-A from Homo sapiens (Human).